The primary structure comprises 607 residues: Heterocyst differentiation ATP-binding protein HepA (607 aa).

In terms of domain architecture, ABC transmembrane type-1 spans 32 to 330 (AILAVIFSFL…INGTVAFLST (299 aa)). 5 helical membrane-spanning segments follow: residues 33 to 53 (ILAV…IGFL), 77 to 97 (ILAA…LILL), 163 to 182 (FSGL…YFVV), 186 to 208 (ISWQ…LSTL), and 290 to 310 (IVIS…FFFV). The 235-residue stretch at 364–598 (IDLVSVDFGY…RGKLWKYHQM (235 aa)) folds into the ABC transporter domain. 397–404 (GASGAGKT) provides a ligand contact to ATP.

This sequence belongs to the ABC transporter superfamily.

It is found in the cell inner membrane. Functionally, acts early in the process of morphological differentiation of heterocysts. The chain is Heterocyst differentiation ATP-binding protein HepA (hepA) from Nostoc sp. (strain PCC 7120 / SAG 25.82 / UTEX 2576).